The chain runs to 323 residues: Lipoyl synthase (323 aa).

Cys-61, Cys-66, Cys-72, Cys-87, Cys-91, Cys-94, and Ser-300 together coordinate [4Fe-4S] cluster. The 217-residue stretch at 73–289 (WDKKHATFMI…ETVAYSKGFL (217 aa)) folds into the Radical SAM core domain.

Belongs to the radical SAM superfamily. Lipoyl synthase family. [4Fe-4S] cluster is required as a cofactor.

It is found in the cytoplasm. It catalyses the reaction [[Fe-S] cluster scaffold protein carrying a second [4Fe-4S](2+) cluster] + N(6)-octanoyl-L-lysyl-[protein] + 2 oxidized [2Fe-2S]-[ferredoxin] + 2 S-adenosyl-L-methionine + 4 H(+) = [[Fe-S] cluster scaffold protein] + N(6)-[(R)-dihydrolipoyl]-L-lysyl-[protein] + 4 Fe(3+) + 2 hydrogen sulfide + 2 5'-deoxyadenosine + 2 L-methionine + 2 reduced [2Fe-2S]-[ferredoxin]. It functions in the pathway protein modification; protein lipoylation via endogenous pathway; protein N(6)-(lipoyl)lysine from octanoyl-[acyl-carrier-protein]: step 2/2. Catalyzes the radical-mediated insertion of two sulfur atoms into the C-6 and C-8 positions of the octanoyl moiety bound to the lipoyl domains of lipoate-dependent enzymes, thereby converting the octanoylated domains into lipoylated derivatives. This is Lipoyl synthase from Rhizobium leguminosarum bv. trifolii (strain WSM2304).